A 231-amino-acid chain; its full sequence is 7-cyano-7-deazaguanine synthase (231 aa).

8-18 (FSGGQDSTTCL) provides a ligand contact to ATP. Zn(2+) contacts are provided by cysteine 188, cysteine 197, cysteine 200, and cysteine 203.

It belongs to the QueC family. Requires Zn(2+) as cofactor.

It catalyses the reaction 7-carboxy-7-deazaguanine + NH4(+) + ATP = 7-cyano-7-deazaguanine + ADP + phosphate + H2O + H(+). The protein operates within purine metabolism; 7-cyano-7-deazaguanine biosynthesis. Its function is as follows. Catalyzes the ATP-dependent conversion of 7-carboxy-7-deazaguanine (CDG) to 7-cyano-7-deazaguanine (preQ(0)). The sequence is that of 7-cyano-7-deazaguanine synthase from Escherichia coli (strain SE11).